The chain runs to 258 residues: UPF0246 protein YaaA (258 aa).

Belongs to the UPF0246 family.

The polypeptide is UPF0246 protein YaaA (Escherichia coli (strain SMS-3-5 / SECEC)).